A 677-amino-acid polypeptide reads, in one-letter code: Beta-galactosidase (677 aa).

A signal peptide spans 1–23 (MPGFLVRILPLLLALLLLGPTRG). The propeptide occupies 24–28 (LRNAT). Asn26 carries an N-linked (GlcNAc...) asparagine glycan. 3 residues coordinate substrate: Tyr83, Glu129, and Asn187. The Proton donor role is filled by Glu188. Cys195 and Cys230 are joined by a disulfide. N-linked (GlcNAc...) asparagine glycosylation is present at Asn247. The active-site Nucleophile is the Glu268. Position 333 (Tyr333) interacts with substrate. Residues Asn464, Asn498, Asn545, and Asn555 are each glycosylated (N-linked (GlcNAc...) asparagine). Cys626 and Cys634 form a disulfide bridge. Residues 654–677 (SKPVEKKLMPSPPQKNKDSWLDHV) form a disordered region. Positions 668–677 (KNKDSWLDHV) are enriched in basic and acidic residues.

The protein belongs to the glycosyl hydrolase 35 family. In terms of assembly, homodimer. May form higher multimers.

It is found in the lysosome. The catalysed reaction is Hydrolysis of terminal non-reducing beta-D-galactose residues in beta-D-galactosides.. In terms of biological role, cleaves beta-linked terminal galactosyl residues from gangliosides, glycoproteins, and glycosaminoglycans. The chain is Beta-galactosidase (GLB1) from Pongo abelii (Sumatran orangutan).